Consider the following 118-residue polypeptide: MIKGIGLDMIDLDRVKQAVEKNPRFIERILTEKETKQYEKYEGSRKIEFLAGRFAAKEAYAKANGTGFGKHLSFTDVEILQVEDGRPHVTMPIKQGETVFVSITHTARSAAAQVIIEQ.

2 residues coordinate Mg(2+): aspartate 8 and glutamate 58.

The protein belongs to the P-Pant transferase superfamily. AcpS family. Mg(2+) is required as a cofactor.

The protein resides in the cytoplasm. The catalysed reaction is apo-[ACP] + CoA = holo-[ACP] + adenosine 3',5'-bisphosphate + H(+). In terms of biological role, transfers the 4'-phosphopantetheine moiety from coenzyme A to a Ser of acyl-carrier-protein. The protein is Holo-[acyl-carrier-protein] synthase of Listeria innocua serovar 6a (strain ATCC BAA-680 / CLIP 11262).